Here is a 630-residue protein sequence, read N- to C-terminus: MSTNSGNNLPESQESPEEPHYPHDTHPGLVPGISVDAQRNKFGLDKTVFGVTAALILAFIAWGISSPDSVSSVSSTMFSWAMTNTGWLLNFVMLIGIGTMLYIAFSRYGRIKLGTDEDEPEFSRFSWIAMMFGAGIGVGIFFFGPSEPLWHYLSPPPHTVEGSTPESLHQALAQSHFHWGLSAWGLYALVGGALAYSSYRRGRVTLISSTFRSLFGEKTEGIAGRLIDMMAIIATLFGTAATLGLSAIQVGQGVQIISGASEITNNILIAIIAILTIGFIISSVSGVSKGIRYLSNLNISLTLGLVLFVFITGPTLFLLNLIPSSVLEYGSEFLSMAGKSLSWGEETIEFQAGWTAFYWAWWIAWTPFVGMFIARISRGRTLREFALITMAIPSFILILAFTIFGGTAITMNRENVDGFDGSSSKEQVLFDMFSNLPLYSITPFILIFVLAVFFVTSADSASVVMGTMSSQGNPAPNKLIVVFWGLCMMGIAVVMLLTGGESALTGLQNLTILIAIPFALVLIVMAIAFIKDLSTDPAAIRQRYAKAAISNAVVRGLEEHGDDFELSIEPAEEGRGAGATFDSTADHITDWYQRTDEEGNDVDYDFTTGKWADGWTPESTEEGEVDAKKD.

Residues 1 to 13 (MSTNSGNNLPESQ) are compositionally biased toward polar residues. The disordered stretch occupies residues 1–28 (MSTNSGNNLPESQESPEEPHYPHDTHPG). Over residues 17–26 (EEPHYPHDTH) the composition is skewed to basic and acidic residues. The next 12 membrane-spanning stretches (helical) occupy residues 47–67 (TVFG…ISSP), 85–105 (TGWL…YIAF), 125–145 (FSWI…FFGP), 177–197 (FHWG…LAYS), 230–250 (MAII…AIQV), 267–287 (ILIA…VSGV), 299–319 (ISLT…LFLL), 354–374 (WTAF…MFIA), 385–405 (FALI…TIFG), 436–456 (LPLY…FFVT), 479–499 (LIVV…LLTG), and 510–530 (LTIL…IAFI). A disordered region spans residues 611 to 630 (WADGWTPESTEEGEVDAKKD).

The protein belongs to the BCCT transporter (TC 2.A.15) family.

It is found in the cell membrane. Its activity is regulated as follows. Uptake is activated by hyperosmotic stress. Shows a small but significant chill stimulation around 15 degrees Celsius. Functionally, involved in the uptake of osmoprotectants. Can transport betaine and ectoine. Na(+) is probably the coupling ion. The polypeptide is Betaine/ectoine transporter LcoP (Corynebacterium glutamicum (strain ATCC 13032 / DSM 20300 / JCM 1318 / BCRC 11384 / CCUG 27702 / LMG 3730 / NBRC 12168 / NCIMB 10025 / NRRL B-2784 / 534)).